Here is a 479-residue protein sequence, read N- to C-terminus: ATP synthase subunit beta (479 aa).

ATP is bound at residue 168-175 (GGAGVGKT).

This sequence belongs to the ATPase alpha/beta chains family. In terms of assembly, F-type ATPases have 2 components, CF(1) - the catalytic core - and CF(0) - the membrane proton channel. CF(1) has five subunits: alpha(3), beta(3), gamma(1), delta(1), epsilon(1). CF(0) has three main subunits: a(1), b(2) and c(9-12). The alpha and beta chains form an alternating ring which encloses part of the gamma chain. CF(1) is attached to CF(0) by a central stalk formed by the gamma and epsilon chains, while a peripheral stalk is formed by the delta and b chains.

Its subcellular location is the cell membrane. The catalysed reaction is ATP + H2O + 4 H(+)(in) = ADP + phosphate + 5 H(+)(out). In terms of biological role, produces ATP from ADP in the presence of a proton gradient across the membrane. The catalytic sites are hosted primarily by the beta subunits. This is ATP synthase subunit beta from Parafrankia sp. (strain EAN1pec).